We begin with the raw amino-acid sequence, 393 residues long: Lipid-A-disaccharide synthase (393 aa).

It belongs to the LpxB family.

The catalysed reaction is a lipid X + a UDP-2-N,3-O-bis[(3R)-3-hydroxyacyl]-alpha-D-glucosamine = a lipid A disaccharide + UDP + H(+). It participates in bacterial outer membrane biogenesis; LPS lipid A biosynthesis. In terms of biological role, condensation of UDP-2,3-diacylglucosamine and 2,3-diacylglucosamine-1-phosphate to form lipid A disaccharide, a precursor of lipid A, a phosphorylated glycolipid that anchors the lipopolysaccharide to the outer membrane of the cell. The chain is Lipid-A-disaccharide synthase from Rhodopseudomonas palustris (strain HaA2).